The chain runs to 146 residues: VHWSAEEKQLITGLWGKVNVAECGAEALARLLIVYPWTQRFFTSFGNLSSASAVLGNPNVRAHGKKVLTSFGEAVKNLDNIKNTFAQLSELHCDKLHVDPENFRLLGDILIIVLAGHFGKDFTPDCQAAWQKLVRAVAHALARKYH.

The Globin domain maps to H2–H146. Heme b contacts are provided by H63 and H92.

The protein belongs to the globin family. As to quaternary structure, heterotetramer of two alpha chains and two beta chains. In terms of tissue distribution, red blood cells.

In terms of biological role, involved in oxygen transport from the lung to the various peripheral tissues. The polypeptide is Hemoglobin subunit beta (HBB) (Psittacula krameri (Rose-ringed parakeet)).